Here is a 215-residue protein sequence, read N- to C-terminus: UPF0502 protein YceH (215 aa).

An N6-acetyllysine modification is found at K80.

Belongs to the UPF0502 family.

The chain is UPF0502 protein YceH from Escherichia coli O127:H6 (strain E2348/69 / EPEC).